The following is a 432-amino-acid chain: Adenylosuccinate synthetase (432 aa).

Residues 13–19 and 41–43 contribute to the GTP site; these read GDEGKGK and GHT. Asp-14 acts as the Proton acceptor in catalysis. Positions 14 and 41 each coordinate Mg(2+). Residues 14 to 17, 39 to 42, Thr-130, Arg-144, Gln-225, Thr-240, and Arg-304 contribute to the IMP site; these read DEGK and NAGH. Residue His-42 is the Proton donor of the active site. Residue 300 to 306 coordinates substrate; it reads AVTGRPR. Residues Arg-306, 332–334, and 415–417 each bind GTP; these read KLD and STG.

This sequence belongs to the adenylosuccinate synthetase family. Homodimer. Mg(2+) is required as a cofactor.

It is found in the cytoplasm. It catalyses the reaction IMP + L-aspartate + GTP = N(6)-(1,2-dicarboxyethyl)-AMP + GDP + phosphate + 2 H(+). It participates in purine metabolism; AMP biosynthesis via de novo pathway; AMP from IMP: step 1/2. Its function is as follows. Plays an important role in the de novo pathway of purine nucleotide biosynthesis. Catalyzes the first committed step in the biosynthesis of AMP from IMP. This chain is Adenylosuccinate synthetase, found in Actinobacillus pleuropneumoniae serotype 3 (strain JL03).